Here is a 329-residue protein sequence, read N- to C-terminus: 4-hydroxythreonine-4-phosphate dehydrogenase (329 aa).

Substrate is bound by residues H136 and T137. A divalent metal cation-binding residues include H166, H211, and H266. Residues K274, N283, and R292 each coordinate substrate.

This sequence belongs to the PdxA family. Homodimer. Zn(2+) is required as a cofactor. It depends on Mg(2+) as a cofactor. Co(2+) serves as cofactor.

It is found in the cytoplasm. The enzyme catalyses 4-(phosphooxy)-L-threonine + NAD(+) = 3-amino-2-oxopropyl phosphate + CO2 + NADH. It functions in the pathway cofactor biosynthesis; pyridoxine 5'-phosphate biosynthesis; pyridoxine 5'-phosphate from D-erythrose 4-phosphate: step 4/5. Functionally, catalyzes the NAD(P)-dependent oxidation of 4-(phosphooxy)-L-threonine (HTP) into 2-amino-3-oxo-4-(phosphooxy)butyric acid which spontaneously decarboxylates to form 3-amino-2-oxopropyl phosphate (AHAP). This chain is 4-hydroxythreonine-4-phosphate dehydrogenase, found in Shigella boydii serotype 18 (strain CDC 3083-94 / BS512).